A 298-amino-acid polypeptide reads, in one-letter code: Mitochondrial 2-oxodicarboxylate carrier (298 aa).

Solcar repeat units follow at residues 10-99, 106-195, and 204-293; these read HETS…YKKF, SPGL…VKNI, and LEFL…TYAW. The next 6 membrane-spanning stretches (helical) occupy residues 16–36, 69–88, 112–132, 166–186, 204–224, and 276–296; these read VAAG…LDVV, FGFY…KRAV, LIAG…FEVV, GLNK…MVYF, LEFL…SVFN, and LGPG…WLQE.

The protein belongs to the mitochondrial carrier (TC 2.A.29) family.

The protein localises to the mitochondrion inner membrane. It carries out the reaction 2-oxoadipate(in) + 2-oxoglutarate(out) = 2-oxoadipate(out) + 2-oxoglutarate(in). It catalyses the reaction hexanedioate(in) + 2-oxoglutarate(out) = hexanedioate(out) + 2-oxoglutarate(in). The catalysed reaction is L-2-aminoadipate(in) + 2-oxoglutarate(out) = L-2-aminoadipate(out) + 2-oxoglutarate(in). The enzyme catalyses glutarate(in) + 2-oxoglutarate(out) = glutarate(out) + 2-oxoglutarate(in). It carries out the reaction 2-oxoheptanedioate(in) + 2-oxoglutarate(out) = 2-oxoheptanedioate(out) + 2-oxoglutarate(in). It catalyses the reaction heptanedioate(in) + 2-oxoglutarate(out) = heptanedioate(out) + 2-oxoglutarate(in). The catalysed reaction is citrate(in) + 2-oxoglutarate(out) = citrate(out) + 2-oxoglutarate(in). In terms of biological role, transports dicarboxylates across the inner membranes of mitochondria by a counter-exchange mechanism. Can transport 2-oxoadipate (2-oxohexanedioate), 2-oxoglutarate, adipate (hexanedioate), glutarate, and to a lesser extent, pimelate (heptanedioate), 2-oxopimelate (2-oxoheptanedioate), 2-aminoadipate (2-aminohexanedioate), oxaloacetate, and citrate. Plays a central role in catabolism of lysine, hydroxylysine, and tryptophan, by transporting common metabolite intermediates (such as 2-oxoadipate) into the mitochondria, where it is converted into acetyl-CoA and can enter the citric acid (TCA) cycle. This chain is Mitochondrial 2-oxodicarboxylate carrier (Slc25a21), found in Mus musculus (Mouse).